A 474-amino-acid polypeptide reads, in one-letter code: Dipeptidase A (474 aa).

Cys6 is an active-site residue.

The protein belongs to the peptidase C69 family. In terms of assembly, homooctamer.

The enzyme catalyses an L-aminoacyl-L-amino acid + H2O = 2 an L-alpha-amino acid. With respect to regulation, inhibited by Zn(2+), Cu(2+), Ca(2+) and Cd(2+). Hydrolyzes a wide range of dipeptides but unable to hydrolyze dipeptides containing proline. Highest activity against Met-Ala. This chain is Dipeptidase A (pepDA), found in Lactobacillus helveticus (Lactobacillus suntoryeus).